The sequence spans 893 residues: MTAKVKDHPPLWGFGTTKTFKIPIEHLDFKYIENCSDVKQLEKILCVLRSGEEGYYPELTEFCEKRLTGLAPRSRALRKDKPAATASSFSAEEWEKIDSDLKSWVSEIKREENTRHFHDPEKHPGVEDPLPPVRGSNSCPRGGKETSSKSKTAKKRIPRDYAEWDKFDVEKECSKIDEDYKEKTVINNKAHLSKIETKIDTAGLTEKEKNFLANREKGKGNEAFYSGDYEEAVMYYTRSLSALPTATAYNNRAQAEIKLQRWSSALEDCEKALELEPGNIKALLRRATTYKHQNKFLEAVDDLRKVLQAEPDNDLAKKTLSEVERELKNSEPASELQTKGKRMVIEEVENSGDEGGKGDEDDHEDDGVDMAAMGNIQKKLMVRSQGGRRSRRARTPMPGAEQQEGQPETGTASTSDNHDLEERRAADSPGDLKSRGNELFRGGQFAEAAVQYSGAIAQLEPTGSENADELSILYSNRAACYLKEGNCRGCIQDCDRALELQPFAVKPLLRRAMAYETLEQYRSAYVDYITVLKIDCRIQLASDSVNRITRILTELDGPKWRERLPPIPAVPASEPLRVWHPAAETPDQDPCPNSCTPTITDEKMFQALKEEGNQLVKDKNYKDAISKYNECLKINSKACAIYTNRALCYLKLGQFEEAKLDCDKALQIDSKNVKASYRLELAQKGLENCRERVADPSQVVLLSPDSSEAARHLDTKNDTAPPSRERERRRIEIQEVDDSSDEEPERPAEASAVEEGWSAERAGKIEVCKPRNAYEFGQVLSTISARKDEEACAQLLVFTAPQDLPVLLSNKLEGDMLLLIMQSLKSHLVAKDPSLVCKHLLYLSKAERFEMMLALTSKDQKEQMAQLFDDLSDAQADCLTAEDIQALRRQYVL.

Basic and acidic residues predominate over residues 112-126 (ENTRHFHDPEKHPGV). The interval 112 to 155 (ENTRHFHDPEKHPGVEDPLPPVRGSNSCPRGGKETSSKSKTAKK) is disordered. 3 TPR repeats span residues 213–246 (ANREKGKGNEAFYSGDYEEAVMYYTRSLSALPTA), 247–279 (TAYNNRAQAEIKLQRWSSALEDCEKALELEPGN), and 280–313 (IKALLRRATTYKHQNKFLEAVDDLRKVLQAEPDN). 3 disordered regions span residues 324 to 344 (ERELKNSEPASELQTKGKRMV), 349 to 368 (ENSGDEGGKGDEDDHEDDGV), and 373 to 437 (MGNI…SRGN). The residue at position 351 (serine 351) is a Phosphoserine. Over residues 403–415 (QEGQPETGTASTS) the composition is skewed to polar residues. Over residues 416-437 (DNHDLEERRAADSPGDLKSRGN) the composition is skewed to basic and acidic residues. TPR repeat units lie at residues 429-463 (PGDLKSRGNELFRGGQFAEAAVQYSGAIAQLEPTG), 471-504 (SILYSNRAACYLKEGNCRGCIQDCDRALELQPFA), 506-538 (KPLLRRAMAYETLEQYRSAYVDYITVLKIDCRI), 605-638 (FQALKEEGNQLVKDKNYKDAISKYNECLKINSKA), and 639-672 (CAIYTNRALCYLKLGQFEEAKLDCDKALQIDSKN). 630 to 637 (ECLKINSK) serves as a coordination point for GTP. Serine 703 carries the phosphoserine modification. Residues 704–756 (PDSSEAARHLDTKNDTAPPSRERERRRIEIQEVDDSSDEEPERPAEASAVEEG) form a disordered region. Positions 708–733 (EAARHLDTKNDTAPPSRERERRRIEI) are enriched in basic and acidic residues. The segment covering 734 to 744 (QEVDDSSDEEP) has biased composition (acidic residues). Serine 739, serine 740, and serine 758 each carry phosphoserine.

In terms of tissue distribution, testis and sperm.

It localises to the cytoplasm. The protein resides in the dynein axonemal particle. May play a role in the cytoplasmic assembly of the ciliary dynein arms. Binds GTP and has GTPase activity. Plays a role in fertilization. The chain is Sperm-associated antigen 1 (Spag1) from Rattus norvegicus (Rat).